Here is a 255-residue protein sequence, read N- to C-terminus: Putative F-box protein L126 (255 aa).

In terms of domain architecture, F-box spans 1 to 46; that stretch reads MLPEEILFMVFSFLDVKELIACSHACSHACSQWRRICSDKLLWVQK.

This Acanthamoeba polyphaga (Amoeba) protein is Putative F-box protein L126.